The primary structure comprises 29 residues: U1-pseudomyrmecitoxin-Pt1 subunit SS2 (29 aa).

The protein belongs to the myrmexin family. In terms of assembly, heterodimer composed of subunit SS2 and subunit LS1 (U1-PSDTX-Pt1e), and heterodimer composed of subunit SS2 and LS2 (U1-PSDTX-Pt1c); disulfide-linked. Expressed by the venom gland.

Its subcellular location is the secreted. Functionally, this heterodimer may have anti-inflammatory properties, since the myrmexin complex (composed of 6 SS-LS heterodimers) inhibits carrageenin-induced edema in a dose-dependent manner (after subcutaneous injection into rats). This is U1-pseudomyrmecitoxin-Pt1 subunit SS2 from Pseudomyrmex triplarinus (Ant).